The primary structure comprises 348 residues: Fe-S cluster assembly protein DRE2 (348 aa).

Residues Met-1 to Val-185 are N-terminal SAM-like domain. Disordered stretches follow at residues Gln-128–Leu-148 and Lys-162–Lys-213. The linker stretch occupies residues Val-186 to Ser-241. The segment covering Glu-188–Ser-206 has biased composition (acidic residues). Residues Cys-248, Cys-259, Cys-262, and Cys-264 each contribute to the [2Fe-2S] cluster site. The tract at residues Cys-248–Cys-264 is fe-S binding site A. [4Fe-4S] cluster contacts are provided by Cys-311, Cys-314, Cys-322, and Cys-325. Short sequence motifs (cx2C motif) lie at residues Cys-311–Cys-314 and Cys-322–Cys-325. The tract at residues Cys-311–Cys-325 is fe-S binding site B.

The protein belongs to the anamorsin family. As to quaternary structure, monomer. Interacts with TAH18. Interacts with MIA40. The cofactor is [2Fe-2S] cluster. [4Fe-4S] cluster serves as cofactor.

Its subcellular location is the cytoplasm. The protein localises to the mitochondrion intermembrane space. Component of the cytosolic iron-sulfur (Fe-S) protein assembly (CIA) machinery required for the maturation of extramitochondrial Fe-S proteins. Part of an electron transfer chain functioning in an early step of cytosolic Fe-S biogenesis, facilitating the de novo assembly of a [4Fe-4S] cluster on the scaffold complex CFD1-NBP35. Electrons are transferred to DRE2 from NADPH via the FAD- and FMN-containing protein TAH18. TAH18-DRE2 are also required for the assembly of the diferric tyrosyl radical cofactor of ribonucleotide reductase (RNR), probably by providing electrons for reduction during radical cofactor maturation in the catalytic small subunit RNR2. The protein is Fe-S cluster assembly protein DRE2 of Lachancea thermotolerans (strain ATCC 56472 / CBS 6340 / NRRL Y-8284) (Yeast).